A 140-amino-acid chain; its full sequence is Arsenate reductase (140 aa).

Residue cysteine 11 is the Nucleophile; cysteine thioarsenate intermediate of the active site.

It belongs to the ArsC family.

The catalysed reaction is [glutaredoxin]-dithiol + arsenate + glutathione + H(+) = glutathionyl-S-S-[glutaredoxin] + arsenite + H2O. Functionally, involved in resistance to arsenate. Catalyzes the reduction of arsenate [As(V)] to arsenite [As(III)]. The resulting arsenite is then extruded from the cell via the aquaglyceroporin AqpS. Does not display antimonate reductase activity. This Rhizobium meliloti (strain 1021) (Ensifer meliloti) protein is Arsenate reductase.